A 410-amino-acid polypeptide reads, in one-letter code: Caspase-1 (410 aa).

One can recognise a CARD domain in the interval Met-1–Ser-91. The propeptide occupies Met-1 to Pro-119. The segment covering Gly-88–Ser-104 has biased composition (polar residues). The tract at residues Gly-88 to Glu-125 is disordered. Catalysis depends on residues His-235 and Cys-284. Positions Ser-297–Asp-322 are excised as a propeptide.

It belongs to the peptidase C14A family. As to quaternary structure, heterotetramer that consists of two anti-parallel arranged heterodimers, each one formed by a 20 kDa (Caspase-1 subunit p20) and a 10 kDa (Caspase-1 subunit p10) subunit. May be a component of the inflammasome, a protein complex which also includes PYCARD, CARD8 and NLRP2 and whose function would be the activation of pro-inflammatory caspases. Component of the AIM2 PANoptosome complex, a multiprotein complex that drives inflammatory cell death (PANoptosis). Both the p10 and p20 subunits interact with MEFV. Interacts with CARD17P/INCA and CARD18. Interacts with SERPINB1; this interaction regulates CASP1 activity. In terms of assembly, heterotetramer that consists of two anti-parallel arranged heterodimers, each one formed by a 20 kDa (Caspase-1 subunit p20) and a 10 kDa (Caspase-1 subunit p10) subunit. In terms of processing, the two subunits are derived from the precursor sequence by an autocatalytic mechanism. Post-translationally, ubiquitinated via 'Lys-11'-linked polyubiquitination. Deubiquitinated by USP8.

It localises to the cytoplasm. The protein resides in the cell membrane. It carries out the reaction Strict requirement for an Asp residue at position P1 and has a preferred cleavage sequence of Tyr-Val-Ala-Asp-|-.. In terms of biological role, thiol protease involved in a variety of inflammatory processes by proteolytically cleaving other proteins, such as the precursors of the inflammatory cytokines interleukin-1 beta (IL1B) and interleukin 18 (IL18) as well as the pyroptosis inducer Gasdermin-D (GSDMD), into active mature peptides. Plays a key role in cell immunity as an inflammatory response initiator: once activated through formation of an inflammasome complex, it initiates a pro-inflammatory response through the cleavage of the two inflammatory cytokines IL1B and IL18, releasing the mature cytokines which are involved in a variety of inflammatory processes. Cleaves a tetrapeptide after an Asp residue at position P1. Also initiates pyroptosis, a programmed lytic cell death pathway, through cleavage of GSDMD. In contrast to cleavage of interleukin IL1B, recognition and cleavage of GSDMD is not strictly dependent on the consensus cleavage site but depends on an exosite interface on CASP1 that recognizes and binds the Gasdermin-D, C-terminal (GSDMD-CT) part. Cleaves and activates CASP7 in response to bacterial infection, promoting plasma membrane repair. Upon inflammasome activation, during DNA virus infection but not RNA virus challenge, controls antiviral immunity through the cleavage of CGAS, rendering it inactive. In apoptotic cells, cleaves SPHK2 which is released from cells and remains enzymatically active extracellularly. The protein is Caspase-1 (CASP1) of Felis catus (Cat).